A 424-amino-acid polypeptide reads, in one-letter code: UDP-N-acetylglucosamine 1-carboxyvinyltransferase (424 aa).

Lysine 22–asparagine 23 lines the phosphoenolpyruvate pocket. Arginine 93 contacts UDP-N-acetyl-alpha-D-glucosamine. The active-site Proton donor is cysteine 117. Cysteine 117 is subject to 2-(S-cysteinyl)pyruvic acid O-phosphothioketal. Residues lysine 162 to valine 165, aspartate 307, and isoleucine 329 each bind UDP-N-acetyl-alpha-D-glucosamine.

It belongs to the EPSP synthase family. MurA subfamily.

The protein resides in the cytoplasm. The enzyme catalyses phosphoenolpyruvate + UDP-N-acetyl-alpha-D-glucosamine = UDP-N-acetyl-3-O-(1-carboxyvinyl)-alpha-D-glucosamine + phosphate. Its pathway is cell wall biogenesis; peptidoglycan biosynthesis. Cell wall formation. Adds enolpyruvyl to UDP-N-acetylglucosamine. This is UDP-N-acetylglucosamine 1-carboxyvinyltransferase from Actinobacillus pleuropneumoniae serotype 5b (strain L20).